Consider the following 335-residue polypeptide: Dolichyl-diphosphooligosaccharide--protein glycosyltransferase subunit MAGT1 (335 aa).

An N-terminal signal peptide occupies residues 1–29 (MAARWRFWCVSVTMVVALLIVCDVPSASA). At 30–184 (QRKKEMVLSE…DVNIRVIRPP (155 aa)) the chain is on the extracellular side. The Thioredoxin domain maps to 47 to 175 (WTNKRPVIRM…IARWIADRTD (129 aa)). Asn71 is a glycosylation site (N-linked (GlcNAc...) asparagine). Cys87 and Cys90 form a disulfide bridge. A helical transmembrane segment spans residues 185 to 205 (NYAGPLMLGLLLAVIGGLVYL). At 206–209 (RRSN) the chain is on the cytoplasmic side. Residues 210–230 (MEFLFNKTGWAFAALCFVLAM) traverse the membrane as a helical segment. Residues 231–270 (TSGQMWNHIRGPPYAHKNPHTGHVNYIHGSSQAQFVAETH) are Extracellular-facing. Residues 271-291 (IVLLFNGGVTLGMVLLCEAAT) traverse the membrane as a helical segment. Over 292 to 300 (SDMDIGKRK) the chain is Cytoplasmic. The helical transmembrane segment at 301-321 (IMCVAGIGLVVLFFSWMLSIF) threads the bilayer. The Extracellular portion of the chain corresponds to 322–335 (RSKYHGYPYSFLMS).

It belongs to the OST3/OST6 family. In terms of assembly, accessory component of the STT3B-containing form of the oligosaccharyltransferase (OST) complex. OST exists in two different complex forms which contain common core subunits RPN1, RPN2, OST48, OST4, DAD1 and TMEM258, either STT3A or STT3B as catalytic subunits, and form-specific accessory subunits. OST can form stable complexes with the Sec61 complex or with both the Sec61 and TRAP complexes. The association of TUSC3 or MAGT1 with the STT3B-containing complex seems to be mutually exclusvice. As to expression, ubiquitous. Expressed at very low levels in brain, lung and kidney.

The protein resides in the cell membrane. It localises to the endoplasmic reticulum. The protein localises to the endoplasmic reticulum membrane. Its pathway is protein modification; protein glycosylation. Functionally, accessory component of the STT3B-containing form of the N-oligosaccharyl transferase (OST) complex which catalyzes the transfer of a high mannose oligosaccharide from a lipid-linked oligosaccharide donor to an asparagine residue within an Asn-X-Ser/Thr consensus motif in nascent polypeptide chains. Involved in N-glycosylation of STT3B-dependent substrates. Specifically required for the glycosylation of a subset of acceptor sites that are near cysteine residues; in this function seems to act redundantly with TUSC3. In its oxidized form proposed to form transient mixed disulfides with a glycoprotein substrate to facilitate access of STT3B to the unmodified acceptor site. Also has oxidoreductase-independent functions in the STT3B-containing OST complex possibly involving substrate recognition. Could indirectly play a role in Mg(2+) transport in epithelial cells. This Homo sapiens (Human) protein is Dolichyl-diphosphooligosaccharide--protein glycosyltransferase subunit MAGT1.